Reading from the N-terminus, the 190-residue chain is Crossover junction endodeoxyribonuclease RuvC (190 aa).

Catalysis depends on residues aspartate 8, glutamate 67, and aspartate 139. Mg(2+) is bound by residues aspartate 8, glutamate 67, and aspartate 139.

The protein belongs to the RuvC family. In terms of assembly, homodimer which binds Holliday junction (HJ) DNA. The HJ becomes 2-fold symmetrical on binding to RuvC with unstacked arms; it has a different conformation from HJ DNA in complex with RuvA. In the full resolvosome a probable DNA-RuvA(4)-RuvB(12)-RuvC(2) complex forms which resolves the HJ. Mg(2+) is required as a cofactor.

Its subcellular location is the cytoplasm. The enzyme catalyses Endonucleolytic cleavage at a junction such as a reciprocal single-stranded crossover between two homologous DNA duplexes (Holliday junction).. The RuvA-RuvB-RuvC complex processes Holliday junction (HJ) DNA during genetic recombination and DNA repair. Endonuclease that resolves HJ intermediates. Cleaves cruciform DNA by making single-stranded nicks across the HJ at symmetrical positions within the homologous arms, yielding a 5'-phosphate and a 3'-hydroxyl group; requires a central core of homology in the junction. The consensus cleavage sequence is 5'-(A/T)TT(C/G)-3'. Cleavage occurs on the 3'-side of the TT dinucleotide at the point of strand exchange. HJ branch migration catalyzed by RuvA-RuvB allows RuvC to scan DNA until it finds its consensus sequence, where it cleaves and resolves the cruciform DNA. The polypeptide is Crossover junction endodeoxyribonuclease RuvC (Pasteurella multocida (strain Pm70)).